The sequence spans 218 residues: GTP cyclohydrolase 1 (218 aa).

3 residues coordinate Zn(2+): Cys109, His112, and Cys180.

The protein belongs to the GTP cyclohydrolase I family. In terms of assembly, toroid-shaped homodecamer, composed of two pentamers of five dimers.

It carries out the reaction GTP + H2O = 7,8-dihydroneopterin 3'-triphosphate + formate + H(+). It functions in the pathway cofactor biosynthesis; 7,8-dihydroneopterin triphosphate biosynthesis; 7,8-dihydroneopterin triphosphate from GTP: step 1/1. The polypeptide is GTP cyclohydrolase 1 (folE) (Haemophilus influenzae (strain ATCC 51907 / DSM 11121 / KW20 / Rd)).